The following is a 240-amino-acid chain: Dihydromonapterin reductase (240 aa).

Residue Tyr152 is the Proton acceptor of the active site.

Belongs to the short-chain dehydrogenases/reductases (SDR) family. FolM subfamily.

It catalyses the reaction (6S)-5,6,7,8-tetrahydrofolate + NADP(+) = 7,8-dihydrofolate + NADPH + H(+). The enzyme catalyses 7,8-dihydromonapterin + NADPH + H(+) = 5,6,7,8-tetrahydromonapterin + NADP(+). In terms of biological role, catalyzes the reduction of dihydromonapterin to tetrahydromonapterin. Also has lower activity with dihydrofolate. This chain is Dihydromonapterin reductase (folM), found in Shigella flexneri serotype 5b (strain 8401).